A 418-amino-acid chain; its full sequence is Tyrosine--tRNA ligase (418 aa).

Y34 contributes to the L-tyrosine binding site. The short motif at 39–48 (PTADSLHLGH) is the 'HIGH' region element. L-tyrosine-binding residues include Y169 and Q173. The 'KMSKS' region motif lies at 229-233 (KFGKS). K232 contributes to the ATP binding site. The S4 RNA-binding domain maps to 352–418 (HNIVEILVAA…GKKKYAVLTY (67 aa)).

Belongs to the class-I aminoacyl-tRNA synthetase family. TyrS type 1 subfamily. Homodimer.

It localises to the cytoplasm. The catalysed reaction is tRNA(Tyr) + L-tyrosine + ATP = L-tyrosyl-tRNA(Tyr) + AMP + diphosphate + H(+). Its function is as follows. Catalyzes the attachment of tyrosine to tRNA(Tyr) in a two-step reaction: tyrosine is first activated by ATP to form Tyr-AMP and then transferred to the acceptor end of tRNA(Tyr). The protein is Tyrosine--tRNA ligase of Streptococcus pyogenes serotype M1.